Reading from the N-terminus, the 513-residue chain is Butyrophilin subfamily 3 member A1 (513 aa).

The N-terminal stretch at M1–A29 is a signal peptide. Ig-like V-type domains follow at residues Q30–V139 and A145–S236. Topologically, residues Q30–G254 are extracellular. Disulfide bonds link C52-C126 and C166-C220. N115 carries N-linked (GlcNAc...) asparagine glycosylation. Residues T255 to W271 form a helical membrane-spanning segment. Residues Q272 to A513 are Cytoplasmic-facing. Residues R322 to A513 enclose the B30.2/SPRY domain.

The protein belongs to the immunoglobulin superfamily. BTN/MOG family. In terms of assembly, homodimer. In terms of processing, N-glycosylated. In terms of tissue distribution, detected on T-cells, natural killer cells, dendritic cells and macrophages (at protein level). Ubiquitous. Highly expressed in heart, pancreas and lung, Moderately expressed in placenta, liver and muscle.

The protein resides in the cell membrane. Functionally, plays a role in T-cell activation and in the adaptive immune response. Regulates the proliferation of activated T-cells. Regulates the release of cytokines and IFNG by activated T-cells. Mediates the response of T-cells toward infected and transformed cells that are characterized by high levels of phosphorylated metabolites, such as isopentenyl pyrophosphate. The polypeptide is Butyrophilin subfamily 3 member A1 (BTN3A1) (Homo sapiens (Human)).